A 629-amino-acid chain; its full sequence is Protein EDS1B (629 aa).

S123 serves as the catalytic Nucleophile. Residues D187 and H317 each act as charge relay system in the active site.

In terms of assembly, interacts (via N-terminus) with PAD4 and SAG101. Part of a nuclear complex made of EDS1, PAD4 and SAG101, that can be redirected to the cytoplasm in the presence of an extranuclear form of EDS1. Does not interact with itself or with EDS1.

It is found in the nucleus. Its subcellular location is the cytoplasm. Its function is as follows. Acts as a second functional copy of EDS1. Can mediate HRT-mediated resistance to turnip crinkle virus. This Arabidopsis thaliana (Mouse-ear cress) protein is Protein EDS1B (EDS1B).